The chain runs to 515 residues: Bifunctional pantoate ligase/cytidylate kinase (515 aa).

Residues 1–279 (MKVVETVARL…VGSTRLIDNV (279 aa)) are pantoate--beta-alanine ligase. 31–38 (MGALHEGH) serves as a coordination point for ATP. Catalysis depends on His38, which acts as the Proton donor. Residue Gln62 coordinates (R)-pantoate. Gln62 serves as a coordination point for beta-alanine. 149–152 (GQKD) is a binding site for ATP. Gln155 contacts (R)-pantoate. ATP contacts are provided by residues Val178 and 186 to 189 (LSSR). The tract at residues 280–515 (VLGQHHERRP…LYRDKVGGSV (236 aa)) is cytidylate kinase.

This sequence in the N-terminal section; belongs to the pantothenate synthetase family. In the C-terminal section; belongs to the cytidylate kinase family. Type 1 subfamily.

The protein resides in the cytoplasm. It carries out the reaction (R)-pantoate + beta-alanine + ATP = (R)-pantothenate + AMP + diphosphate + H(+). The enzyme catalyses CMP + ATP = CDP + ADP. It catalyses the reaction dCMP + ATP = dCDP + ADP. Its pathway is cofactor biosynthesis; (R)-pantothenate biosynthesis; (R)-pantothenate from (R)-pantoate and beta-alanine: step 1/1. Functionally, catalyzes the condensation of pantoate with beta-alanine in an ATP-dependent reaction via a pantoyl-adenylate intermediate. Its function is as follows. Catalyzes the transfer of a phosphate group from ATP to either CMP or dCMP to form CDP or dCDP and ADP, respectively. The sequence is that of Bifunctional pantoate ligase/cytidylate kinase from Gloeobacter violaceus (strain ATCC 29082 / PCC 7421).